The primary structure comprises 259 residues: UPF0246 protein PST_1170 (259 aa).

This sequence belongs to the UPF0246 family.

The polypeptide is UPF0246 protein PST_1170 (Stutzerimonas stutzeri (strain A1501) (Pseudomonas stutzeri)).